The primary structure comprises 235 residues: Carboxy-S-adenosyl-L-methionine synthase (235 aa).

S-adenosyl-L-methionine contacts are provided by residues Y35, 60 to 62, 83 to 84, N124, and R191; these read GCS and DN.

It belongs to the class I-like SAM-binding methyltransferase superfamily. Cx-SAM synthase family. In terms of assembly, homodimer.

The enzyme catalyses prephenate + S-adenosyl-L-methionine = carboxy-S-adenosyl-L-methionine + 3-phenylpyruvate + H2O. Functionally, catalyzes the conversion of S-adenosyl-L-methionine (SAM) to carboxy-S-adenosyl-L-methionine (Cx-SAM). This chain is Carboxy-S-adenosyl-L-methionine synthase, found in Campylobacter jejuni subsp. jejuni serotype O:2 (strain ATCC 700819 / NCTC 11168).